Reading from the N-terminus, the 151-residue chain is MLLPKRTKYRKMQKGRSPGLSYRGNNVVFGEYGLMALEPSWISSRQIEAARRAITNYVKRGGKVWIRIFPDKPVTRKPAETRMGGGKGSVDHWVAVVKPGRIMFELAGVREDVAHEALRRAAQKLPIKCKVIDREEQGTMAKPEEVSSESE.

Belongs to the universal ribosomal protein uL16 family. Part of the 50S ribosomal subunit.

Its function is as follows. Binds 23S rRNA and is also seen to make contacts with the A and possibly P site tRNAs. This is Large ribosomal subunit protein uL16 from Chloroflexus aurantiacus (strain ATCC 29364 / DSM 637 / Y-400-fl).